The chain runs to 466 residues: Soluble pyridine nucleotide transhydrogenase (466 aa).

FAD is bound at residue E36–C45.

This sequence belongs to the class-I pyridine nucleotide-disulfide oxidoreductase family. FAD is required as a cofactor.

The protein resides in the cytoplasm. It carries out the reaction NAD(+) + NADPH = NADH + NADP(+). In terms of biological role, conversion of NADPH, generated by peripheral catabolic pathways, to NADH, which can enter the respiratory chain for energy generation. This is Soluble pyridine nucleotide transhydrogenase from Colwellia psychrerythraea (strain 34H / ATCC BAA-681) (Vibrio psychroerythus).